The primary structure comprises 440 residues: 3-phosphoshikimate 1-carboxyvinyltransferase (440 aa).

The 3-phosphoshikimate site is built by Lys-26, Ser-27, and Arg-31. Lys-26 is a binding site for phosphoenolpyruvate. Phosphoenolpyruvate contacts are provided by Gly-100 and Arg-134. The 3-phosphoshikimate site is built by Ser-180, Ser-181, Gln-182, Ser-208, Asp-323, Asn-346, and Lys-350. Gln-182 is a binding site for phosphoenolpyruvate. The active-site Proton acceptor is Asp-323. Positions 354, 398, and 423 each coordinate phosphoenolpyruvate.

It belongs to the EPSP synthase family. In terms of assembly, monomer.

It localises to the cytoplasm. It catalyses the reaction 3-phosphoshikimate + phosphoenolpyruvate = 5-O-(1-carboxyvinyl)-3-phosphoshikimate + phosphate. It functions in the pathway metabolic intermediate biosynthesis; chorismate biosynthesis; chorismate from D-erythrose 4-phosphate and phosphoenolpyruvate: step 6/7. In terms of biological role, catalyzes the transfer of the enolpyruvyl moiety of phosphoenolpyruvate (PEP) to the 5-hydroxyl of shikimate-3-phosphate (S3P) to produce enolpyruvyl shikimate-3-phosphate and inorganic phosphate. The chain is 3-phosphoshikimate 1-carboxyvinyltransferase from Pasteurella multocida (strain Pm70).